Consider the following 152-residue polypeptide: Aspartate carbamoyltransferase regulatory chain (152 aa).

Zn(2+)-binding residues include C109, C114, C138, and C141.

The protein belongs to the PyrI family. As to quaternary structure, contains catalytic and regulatory chains. Zn(2+) serves as cofactor.

Involved in allosteric regulation of aspartate carbamoyltransferase. This is Aspartate carbamoyltransferase regulatory chain from Thermoplasma volcanium (strain ATCC 51530 / DSM 4299 / JCM 9571 / NBRC 15438 / GSS1).